We begin with the raw amino-acid sequence, 275 residues long: NH(3)-dependent NAD(+) synthetase (275 aa).

Glycine 46–serine 53 is a binding site for ATP. A Mg(2+)-binding site is contributed by aspartate 52. Position 140 (arginine 140) interacts with deamido-NAD(+). Threonine 160 serves as a coordination point for ATP. Position 165 (glutamate 165) interacts with Mg(2+). Deamido-NAD(+) contacts are provided by lysine 173 and aspartate 180. ATP-binding residues include lysine 189 and threonine 211. Histidine 260 to lysine 261 is a deamido-NAD(+) binding site.

Belongs to the NAD synthetase family. Homodimer.

It carries out the reaction deamido-NAD(+) + NH4(+) + ATP = AMP + diphosphate + NAD(+) + H(+). It participates in cofactor biosynthesis; NAD(+) biosynthesis; NAD(+) from deamido-NAD(+) (ammonia route): step 1/1. Catalyzes the ATP-dependent amidation of deamido-NAD to form NAD. Uses ammonia as a nitrogen source. The sequence is that of NH(3)-dependent NAD(+) synthetase from Salmonella paratyphi A (strain ATCC 9150 / SARB42).